We begin with the raw amino-acid sequence, 520 residues long: 4-hydroxyphenylacetate 3-monooxygenase oxygenase component (520 aa).

Belongs to the FADH(2)-utilizing monooxygenase family. As to quaternary structure, 4-HPA 3-monooxygenase consists of a reductase component HpaC and an oxygenase component HpaB.

It carries out the reaction 4-hydroxyphenylacetate + FADH2 + O2 = 3,4-dihydroxyphenylacetate + FAD + H2O + H(+). It participates in aromatic compound metabolism; 4-hydroxyphenylacetate degradation; pyruvate and succinate semialdehyde from 4-hydroxyphenylacetate: step 1/7. Functionally, utilizes FADH(2) supplied by HpaC or by another flavin reductase, to catalyze the hydroxylation of 4-hydroxyphenylacetic acid, leading to the production of 3,4-DHPA. Can also oxidize phenol to catechol, and hydroxylate other phenol derivatives. The sequence is that of 4-hydroxyphenylacetate 3-monooxygenase oxygenase component (hpaB) from Escherichia coli.